The chain runs to 399 residues: Arginase (399 aa).

Mn(2+) is bound by residues histidine 193, aspartate 216, histidine 218, and aspartate 220. Residues 218 to 222, 229 to 231, and aspartate 273 each bind substrate; these read HADIN and SGN. 2 residues coordinate Mn(2+): aspartate 322 and aspartate 324. Residues threonine 336 and glutamate 367 each coordinate substrate.

The protein belongs to the arginase family. Mn(2+) is required as a cofactor.

Its subcellular location is the cytoplasm. The enzyme catalyses L-arginine + H2O = urea + L-ornithine. The protein operates within nitrogen metabolism; urea cycle; L-ornithine and urea from L-arginine: step 1/1. This is Arginase (CAR1) from Eremothecium gossypii (strain ATCC 10895 / CBS 109.51 / FGSC 9923 / NRRL Y-1056) (Yeast).